The chain runs to 620 residues: LysM domain receptor-like kinase 3 (620 aa).

The signal sequence occupies residues 1–23 (MNLKNGLLLFILFLDCVFFKVES). At 24-231 (KCVKGCDVAL…YSRTGIAKGS (208 aa)) the chain is on the extracellular side. 3 cysteine pairs are disulfide-bonded: Cys-25-Cys-92, Cys-29-Cys-154, and Cys-90-Cys-152. Residue Asn-46 is glycosylated (N-linked (GlcNAc...) asparagine). The LysM 1; degenerate domain maps to 46–72 (NISNFMQSKIVLTNSFDVIMSYNRDVV). LysM domains are found at residues 102-148 (FEYT…KINV) and 167-210 (VTYP…VFIP). Chitin contacts are provided by residues 108–114 (EGDDYDL) and 136–142 (DPNHIPV). Residues Asn-147 and Asn-199 are each glycosylated (N-linked (GlcNAc...) asparagine). The helical transmembrane segment at 232 to 252 (AVGIAMAGIFGLLLFVIYIYA) threads the bilayer. The Cytoplasmic portion of the chain corresponds to 253-620 (KYFQKKEEEK…QSLINLLSTR (368 aa)). A compositionally biased stretch (polar residues) spans 265 to 278 (LPQTSRAFSTQDAS). The tract at residues 265–292 (LPQTSRAFSTQDASGSAEYETSGSSGHA) is disordered. Phosphoserine is present on residues Ser-269 and Ser-273. The region spanning 322–595 (FSLDNKIGQG…RSIVVALMTL (274 aa)) is the Protein kinase domain. ATP contacts are provided by residues 328-336 (IGQGGFGAV) and Lys-349. The active-site Proton acceptor is Asp-441.

Belongs to the protein kinase superfamily. Ser/Thr protein kinase family. In terms of assembly, forms homodimers and homooligomers. Forms heteromeric complexes with NFP at the cell periphery in nodules. Interacts with PUB1. In terms of processing, autophosphorylated. As to expression, expressed in the epidermal and root hair cells of the developing root hair zone during nonsymbiotic growth. Accumulates in roots and nodules during symbiotic growth with rhizobia. Localized at the cell periphery in a narrow zone of about two cell layers (e.g. L1/L2 zone) at the nodule apex upon infection by rhizobia, from the meristem to the infection zone (at protein level).

The protein resides in the cell membrane. It localises to the vacuole lumen. It catalyses the reaction L-seryl-[protein] + ATP = O-phospho-L-seryl-[protein] + ADP + H(+). The enzyme catalyses L-threonyl-[protein] + ATP = O-phospho-L-threonyl-[protein] + ADP + H(+). Putative receptor for S.meliloti Nod factor signals essential for the establishment of the nitrogen-fixing, root nodule symbiosis with S.meliloti. Involved in the control of root hair curling after S.meliloti infection, probably by modulating the reorganization of the microtubular cytoskeleton in epidermal and cortical cells. Regulates a subset of Nod factor-induced genes. The sequence is that of LysM domain receptor-like kinase 3 from Medicago truncatula (Barrel medic).